A 157-amino-acid polypeptide reads, in one-letter code: Crossover junction endodeoxyribonuclease RuvC (157 aa).

Residues D7, E67, and D139 contribute to the active site. Residues D7, E67, and D139 each coordinate Mg(2+).

It belongs to the RuvC family. In terms of assembly, homodimer which binds Holliday junction (HJ) DNA. The HJ becomes 2-fold symmetrical on binding to RuvC with unstacked arms; it has a different conformation from HJ DNA in complex with RuvA. In the full resolvosome a probable DNA-RuvA(4)-RuvB(12)-RuvC(2) complex forms which resolves the HJ. It depends on Mg(2+) as a cofactor.

The protein resides in the cytoplasm. The catalysed reaction is Endonucleolytic cleavage at a junction such as a reciprocal single-stranded crossover between two homologous DNA duplexes (Holliday junction).. Functionally, the RuvA-RuvB-RuvC complex processes Holliday junction (HJ) DNA during genetic recombination and DNA repair. Endonuclease that resolves HJ intermediates. Cleaves cruciform DNA by making single-stranded nicks across the HJ at symmetrical positions within the homologous arms, yielding a 5'-phosphate and a 3'-hydroxyl group; requires a central core of homology in the junction. The consensus cleavage sequence is 5'-(A/T)TT(C/G)-3'. Cleavage occurs on the 3'-side of the TT dinucleotide at the point of strand exchange. HJ branch migration catalyzed by RuvA-RuvB allows RuvC to scan DNA until it finds its consensus sequence, where it cleaves and resolves the cruciform DNA. The protein is Crossover junction endodeoxyribonuclease RuvC of Prochlorococcus marinus subsp. pastoris (strain CCMP1986 / NIES-2087 / MED4).